Here is a 556-residue protein sequence, read N- to C-terminus: 2-succinyl-5-enolpyruvyl-6-hydroxy-3-cyclohexene-1-carboxylate synthase (556 aa).

It belongs to the TPP enzyme family. MenD subfamily. As to quaternary structure, homodimer. Mg(2+) serves as cofactor. The cofactor is Mn(2+). Requires thiamine diphosphate as cofactor.

It catalyses the reaction isochorismate + 2-oxoglutarate + H(+) = 5-enolpyruvoyl-6-hydroxy-2-succinyl-cyclohex-3-ene-1-carboxylate + CO2. The protein operates within quinol/quinone metabolism; 1,4-dihydroxy-2-naphthoate biosynthesis; 1,4-dihydroxy-2-naphthoate from chorismate: step 2/7. Its pathway is quinol/quinone metabolism; menaquinone biosynthesis. Functionally, catalyzes the thiamine diphosphate-dependent decarboxylation of 2-oxoglutarate and the subsequent addition of the resulting succinic semialdehyde-thiamine pyrophosphate anion to isochorismate to yield 2-succinyl-5-enolpyruvyl-6-hydroxy-3-cyclohexene-1-carboxylate (SEPHCHC). The polypeptide is 2-succinyl-5-enolpyruvyl-6-hydroxy-3-cyclohexene-1-carboxylate synthase (Escherichia coli O157:H7).